Reading from the N-terminus, the 84-residue chain is Small ribosomal subunit protein uS17 (84 aa).

It belongs to the universal ribosomal protein uS17 family. Part of the 30S ribosomal subunit.

Functionally, one of the primary rRNA binding proteins, it binds specifically to the 5'-end of 16S ribosomal RNA. The protein is Small ribosomal subunit protein uS17 of Clostridium botulinum (strain Alaska E43 / Type E3).